A 77-amino-acid chain; its full sequence is Exodeoxyribonuclease 7 small subunit (77 aa).

It belongs to the XseB family. Heterooligomer composed of large and small subunits.

The protein resides in the cytoplasm. The catalysed reaction is Exonucleolytic cleavage in either 5'- to 3'- or 3'- to 5'-direction to yield nucleoside 5'-phosphates.. Functionally, bidirectionally degrades single-stranded DNA into large acid-insoluble oligonucleotides, which are then degraded further into small acid-soluble oligonucleotides. The chain is Exodeoxyribonuclease 7 small subunit from Trichlorobacter lovleyi (strain ATCC BAA-1151 / DSM 17278 / SZ) (Geobacter lovleyi).